Here is a 599-residue protein sequence, read N- to C-terminus: Sulfite reductase [NADPH] flavoprotein alpha-component (599 aa).

One can recognise a Flavodoxin-like domain in the interval 64–202; the sequence is ITIISASQTG…AASEWRARVV (139 aa). FMN contacts are provided by residues 70–75, 117–120, and 153–162; these read SQTGNA, STQG, and LGDSSYEFFC. Residues 234 to 448 enclose the FAD-binding FR-type domain; that stretch reads DAPLVASLSV…IEHNDNFRLP (215 aa). FAD contacts are provided by residues threonine 322, alanine 356, 386–389, 404–406, tyrosine 410, and 419–422; these read RLYS, TVG, and GGAS. Residues 519–520, 525–529, and aspartate 561 each bind NADP(+); these read SR and KVYVQ. An FAD-binding site is contributed by tyrosine 599.

The protein belongs to the NADPH-dependent sulphite reductase flavoprotein subunit CysJ family. This sequence in the N-terminal section; belongs to the flavodoxin family. In the C-terminal section; belongs to the flavoprotein pyridine nucleotide cytochrome reductase family. Alpha(8)-beta(8). The alpha component is a flavoprotein, the beta component is a hemoprotein. Requires FAD as cofactor. It depends on FMN as a cofactor.

The enzyme catalyses hydrogen sulfide + 3 NADP(+) + 3 H2O = sulfite + 3 NADPH + 4 H(+). It functions in the pathway sulfur metabolism; hydrogen sulfide biosynthesis; hydrogen sulfide from sulfite (NADPH route): step 1/1. In terms of biological role, component of the sulfite reductase complex that catalyzes the 6-electron reduction of sulfite to sulfide. This is one of several activities required for the biosynthesis of L-cysteine from sulfate. The flavoprotein component catalyzes the electron flow from NADPH -&gt; FAD -&gt; FMN to the hemoprotein component. The sequence is that of Sulfite reductase [NADPH] flavoprotein alpha-component from Escherichia coli (strain ATCC 8739 / DSM 1576 / NBRC 3972 / NCIMB 8545 / WDCM 00012 / Crooks).